The primary structure comprises 286 residues: Polyamine aminopropyltransferase (286 aa).

In terms of domain architecture, PABS spans 5–238 (TMWHETLHDQ…GIMTFAWATD (234 aa)). Glutamine 33 contributes to the S-methyl-5'-thioadenosine binding site. The spermidine site is built by histidine 64 and aspartate 88. S-methyl-5'-thioadenosine contacts are provided by residues glutamate 108 and 140–141 (DG). Aspartate 158 functions as the Proton acceptor in the catalytic mechanism. 158 to 161 (DCTD) is a spermidine binding site. Proline 165 lines the S-methyl-5'-thioadenosine pocket.

Belongs to the spermidine/spermine synthase family. As to quaternary structure, homodimer or homotetramer.

The protein resides in the cytoplasm. It carries out the reaction S-adenosyl 3-(methylsulfanyl)propylamine + putrescine = S-methyl-5'-thioadenosine + spermidine + H(+). The protein operates within amine and polyamine biosynthesis; spermidine biosynthesis; spermidine from putrescine: step 1/1. Its function is as follows. Catalyzes the irreversible transfer of a propylamine group from the amino donor S-adenosylmethioninamine (decarboxy-AdoMet) to putrescine (1,4-diaminobutane) to yield spermidine. The sequence is that of Polyamine aminopropyltransferase from Salmonella paratyphi A (strain ATCC 9150 / SARB42).